Here is a 191-residue protein sequence, read N- to C-terminus: Glutathione-dependent formaldehyde-activating enzyme (191 aa).

Residues 22–169 (FAGGTLQCLC…LTELGLTPYD (148 aa)) enclose the CENP-V/GFA domain. Cysteine 29, cysteine 31, cysteine 50, cysteine 52, cysteine 55, cysteine 97, and cysteine 100 together coordinate Zn(2+).

It belongs to the Gfa family. The cofactor is Zn(2+).

The catalysed reaction is S-(hydroxymethyl)glutathione = glutathione + formaldehyde. It functions in the pathway one-carbon metabolism; formaldehyde degradation; formate from formaldehyde (glutathione route): step 1/3. Functionally, catalyzes the condensation of formaldehyde and glutathione to S-hydroxymethylglutathione. The polypeptide is Glutathione-dependent formaldehyde-activating enzyme (Xanthomonas campestris pv. campestris (strain 8004)).